Reading from the N-terminus, the 336-residue chain is Dihydroorotate dehydrogenase (quinone) (336 aa).

FMN-binding positions include 62–66 and Thr86; that span reads AGLDK. Substrate is bound at residue Lys66. 111–115 is a binding site for substrate; it reads NRMGF. Asn139 and Asn172 together coordinate FMN. Asn172 contacts substrate. The Nucleophile role is filled by Ser175. Asn177 provides a ligand contact to substrate. Residues Lys217 and Thr245 each contribute to the FMN site. 246–247 contacts substrate; the sequence is NT. FMN contacts are provided by residues Gly268, Gly297, and 318 to 319; that span reads YT.

Belongs to the dihydroorotate dehydrogenase family. Type 2 subfamily. As to quaternary structure, monomer. FMN is required as a cofactor.

It localises to the cell membrane. The catalysed reaction is (S)-dihydroorotate + a quinone = orotate + a quinol. The protein operates within pyrimidine metabolism; UMP biosynthesis via de novo pathway; orotate from (S)-dihydroorotate (quinone route): step 1/1. Catalyzes the conversion of dihydroorotate to orotate with quinone as electron acceptor. This is Dihydroorotate dehydrogenase (quinone) from Vibrio parahaemolyticus serotype O3:K6 (strain RIMD 2210633).